The primary structure comprises 475 residues: Glycogen synthase (475 aa).

ADP-alpha-D-glucose is bound at residue Lys-15.

Belongs to the glycosyltransferase 1 family. Bacterial/plant glycogen synthase subfamily.

It carries out the reaction [(1-&gt;4)-alpha-D-glucosyl](n) + ADP-alpha-D-glucose = [(1-&gt;4)-alpha-D-glucosyl](n+1) + ADP + H(+). It functions in the pathway glycan biosynthesis; glycogen biosynthesis. Synthesizes alpha-1,4-glucan chains using ADP-glucose. The chain is Glycogen synthase from Anaeromyxobacter sp. (strain Fw109-5).